A 258-amino-acid polypeptide reads, in one-letter code: Imidazole glycerol phosphate synthase subunit HisF (258 aa).

Residues Asp-11 and Asp-130 contribute to the active site.

This sequence belongs to the HisA/HisF family. As to quaternary structure, heterodimer of HisH and HisF.

Its subcellular location is the cytoplasm. It catalyses the reaction 5-[(5-phospho-1-deoxy-D-ribulos-1-ylimino)methylamino]-1-(5-phospho-beta-D-ribosyl)imidazole-4-carboxamide + L-glutamine = D-erythro-1-(imidazol-4-yl)glycerol 3-phosphate + 5-amino-1-(5-phospho-beta-D-ribosyl)imidazole-4-carboxamide + L-glutamate + H(+). It functions in the pathway amino-acid biosynthesis; L-histidine biosynthesis; L-histidine from 5-phospho-alpha-D-ribose 1-diphosphate: step 5/9. Functionally, IGPS catalyzes the conversion of PRFAR and glutamine to IGP, AICAR and glutamate. The HisF subunit catalyzes the cyclization activity that produces IGP and AICAR from PRFAR using the ammonia provided by the HisH subunit. This is Imidazole glycerol phosphate synthase subunit HisF from Salmonella agona (strain SL483).